A 708-amino-acid polypeptide reads, in one-letter code: Solute carrier family 15 member 1 (708 aa).

Residues 1-21 (MGMSKSHSFFGYPLSIFFIVV) traverse the membrane as a helical segment. The Extracellular segment spans residues 22 to 53 (NEFCERFSYYGMRAILILYFTNFISWDDNLST). N50 is a glycosylation site (N-linked (GlcNAc...) asparagine). A helical membrane pass occupies residues 54–74 (AIYHTFVALCYLTPILGALIA). Topologically, residues 75-82 (DSWLGKFK) are cytoplasmic. The helical transmembrane segment at 83–103 (TIVSLSIVYTIGQAVTSVSSI) threads the bilayer. Over 104 to 118 (NDLTDHNHDGTPDSL) the chain is Extracellular. The helical transmembrane segment at 119 to 139 (PVHVVLSLIGLALIALGTGGI) threads the bilayer. Residues 140-161 (KPCVSAFGGDQFEEGQEKQRNR) lie on the Cytoplasmic side of the membrane. A helical membrane pass occupies residues 162–182 (FFSIFYLAINAGSLLSTIITP). The Extracellular portion of the chain corresponds to 183–198 (MLRVQQCGIHSKQACY). Residues 199-219 (PLAFGVPAALMAVALIVFVLG) traverse the membrane as a helical segment. Residues 220-276 (SGMYKKFKPQGNIMGKVAKCIGFAIKNRFRHRSKAFPKREHWLDWAKEKYDERLISQ) lie on the Cytoplasmic side of the membrane. The helical transmembrane segment at 277–297 (IKMVTRVMFLYIPLPMFWALF) threads the bilayer. At 298 to 327 (DQQGSRWTLQATTMSGKIGALEIQPDQMQT) the chain is on the extracellular side. A helical membrane pass occupies residues 328-348 (VNAILIVIMVPIFDAVLYPLI). Residues 349 to 361 (AKCGFNFTSLKKM) lie on the Cytoplasmic side of the membrane. The helical transmembrane segment at 362 to 382 (AVGMVLASMAFVVAAIVQVEI) threads the bilayer. Residues 383-584 (DKTLPVFPKG…SANTVNMALQ (202 aa)) lie on the Extracellular side of the membrane. The extracellular domain (ECD) stretch occupies residues 383-584 (DKTLPVFPKG…SANTVNMALQ (202 aa)). N-linked (GlcNAc...) asparagine glycosylation is found at N404, N408, N439, N509, N514, and N562. The helical transmembrane segment at 585–605 (IPQYFLLTCGEVVFSVTGLEF) threads the bilayer. The Cytoplasmic segment spans residues 606 to 619 (SYSQAPSNMKSVLQ). The helical transmembrane segment at 620–640 (AGWLLTVAVGNIIVLIVAGAG) threads the bilayer. The Extracellular segment spans residues 641–645 (QFSKQ). A helical transmembrane segment spans residues 646-666 (WAEYILFAALLLVVCVIFAIM). The Cytoplasmic portion of the chain corresponds to 667 to 708 (ARFYTYINPAEIEAQFDEDEKKNRLEKSNPYFMSGANSQKQM).

This sequence belongs to the major facilitator superfamily. Proton-dependent oligopeptide transporter (POT/PTR) (TC 2.A.17) family. Interacts (via extracellular domain region) with trypsin. In terms of tissue distribution, expressed in small intestine.

Its subcellular location is the apical cell membrane. The enzyme catalyses a dipeptide(out) + H(+)(out) = a dipeptide(in) + H(+)(in). It catalyses the reaction an L-amino acid tripeptide(out) + H(+)(out) = an L-amino acid tripeptide(in) + H(+)(in). It carries out the reaction L-alanyl-L-lysine(out) + H(+)(out) = L-alanyl-L-lysine(in) + H(+)(in). The catalysed reaction is L-alanyl-L-proline(out) + H(+)(out) = L-alanyl-L-proline(in) + H(+)(in). The enzyme catalyses L-alanyl-L-valine(out) + H(+)(out) = L-alanyl-L-valine(in) + H(+)(in). It catalyses the reaction carnosine(out) + H(+)(out) = carnosine(in) + H(+)(in). It carries out the reaction glycyl-L-glutamine(out) + H(+)(out) = glycyl-L-glutamine(in) + H(+)(in). The catalysed reaction is glycyl-L-leucine(out) + H(+)(out) = glycyl-L-leucine(in) + H(+)(in). The enzyme catalyses glycyl-L-proline(out) + H(+)(out) = glycyl-L-proline(in) + H(+)(in). It catalyses the reaction glycyl-sarcosine(out) + H(+)(out) = glycyl-sarcosine(in) + H(+)(in). It carries out the reaction L-leucyl-L-leucine(out) + H(+)(out) = L-leucyl-L-leucine(in) + H(+)(in). The catalysed reaction is L-leucyl-L-proline(out) + H(+)(out) = L-leucyl-L-proline(in) + H(+)(in). The enzyme catalyses L-phenylalanyl-L-leucine(out) + H(+)(out) = L-phenylalanyl-L-leucine(in) + H(+)(in). It catalyses the reaction L-phenylalanyl-L-phenylalanine(out) + H(+)(out) = L-phenylalanyl-L-phenylalanine(in) + H(+)(in). It carries out the reaction L-lysyl-glycine(out) + H(+)(out) = L-lysyl-glycine(in) + H(+)(in). The catalysed reaction is L-tyrosylglycine(out) + H(+)(out) = L-tyrosylglycine(in) + H(+)(in). The enzyme catalyses L-alanyl-L-aspartate(out) + 2 H(+)(out) = L-alanyl-L-aspartate(in) + 2 H(+)(in). It catalyses the reaction L-aspartyl-glycine(out) + 2 H(+)(out) = L-aspartyl-glycine(in) + 2 H(+)(in). It carries out the reaction glycyl-L-aspartate(out) + 2 H(+)(out) = glycyl-L-aspartate(in) + 2 H(+)(in). The catalysed reaction is glycyl-L-glutamate(out) + 2 H(+)(out) = glycyl-L-glutamate(in) + 2 H(+)(in). The enzyme catalyses L-alanyl-L-leucyl-L-alanine(out) + H(+)(out) = L-alanyl-L-leucyl-L-alanine(in) + H(+)(in). It catalyses the reaction L-alanyl-L-prolylglycine(out) + H(+)(out) = L-alanyl-L-prolylglycine(in) + H(+)(in). It carries out the reaction glycylglycyl-L-isoleucine(out) + H(+)(out) = glycylglycyl-L-isoleucine(in) + H(+)(in). The catalysed reaction is glycylglycyl-L-proline(out) + H(+)(out) = glycylglycyl-L-proline(in) + H(+)(in). The enzyme catalyses L-methionyl-L-phenylalanyl-L-methionine(out) + H(+)(out) = L-methionyl-L-phenylalanyl-L-methionine(in) + H(+)(in). It catalyses the reaction N-acetyl-D-muramoyl-L-alanyl-D-isoglutamine(out) + 2 H(+)(out) = N-acetyl-D-muramoyl-L-alanyl-D-isoglutamine(in) + 2 H(+)(in). It carries out the reaction N(alpha)-formyl-L-methionyl-L-leucyl-L-phenylalanine(out) + 2 H(+)(out) = N(alpha)-formyl-L-methionyl-L-leucyl-L-phenylalanine(in) + 2 H(+)(in). Its function is as follows. Electrogenic proton-coupled amino-acid transporter that transports oligopeptides of 2 to 4 amino acids with a preference for dipeptides. Transports neutral and monovalently charged peptides with a proton to peptide stoichiometry of 1:1 or 2:1. Primarily responsible for the absorption of dietary di- and tripeptides from the small intestinal lumen. Mediates transepithelial transport of muramyl and N-formylated bacterial dipeptides contributing to recognition of pathogenic bacteria by the mucosal immune system. The sequence is that of Solute carrier family 15 member 1 from Homo sapiens (Human).